The chain runs to 189 residues: Phomopsin biosynthesis cluster protein D (189 aa).

Belongs to the oryJ family.

Its function is as follows. Part of the gene cluster that mediates the biosynthesis of the phomopsins, a group of hexapeptide mycotoxins which infects lupins and causes lupinosis disease in livestock. The role of phomC within the phomopsins biosynthesis pathway has still to be determined. The pathway starts with the processing of the precursor phomA by several endopeptidases including kexin proteases as well as the cluster-specific S41 family peptidase phomP1 and the oligopeptidase phomG to produce 10 identical copies of the hexapeptide Tyr-Val-Ile-Pro-Ile-Asp. After being excised from the precursor peptide, the core peptides are cyclized and modified post-translationally by enzymes encoded within the gene cluster. The timing and order of proteolysis of the phomA precursor and PTMs are still unknown. Two tyrosinase-like enzymes, phomQ1 and phomQ2, catalyze the chlorination and hydroxylation of Tyr, respectively. PhomYb, is proposed to be involved in the construction of the macrocyclic structure. The other 4 ustYa family proteins may be involved in PTMs that generate the unique structure of phomopsin A. PhomYa is required for the hydroxylation of C-beta of Tyr. PhomYc, phomYd, and phomYe are responsible for the biosynthesis of 2,3-dehydroisoleucine (dIle), 2,3-dehydroaspartic acid (dAsp), and 3,4-dehydroproline (dPro), respectively. While dIle formation by phomYc is indispensable for the installation of dAsp by phomYd, the order of the other PTMs have not been elucidated yet. Most of the biosynthetic enzymes likely have broad substrate specificity, and thus, there might be a metabolic grid from a precursor to phomopsin A. The enzyme(s) responsible for the biosynthesis of 3,4-dehydrovaline (dVal) have also not been identified yet. Finally, phomM acts as an S-adenosylmethionine-dependent alpha-N-methyltransferase that catalyzes two successive N-methylation reactions, converting N-desmethyl-phomopsin A to phomopsin A and phomopsin A further to an N,N-dimethylated congener called phomopsin E. This chain is Phomopsin biosynthesis cluster protein D, found in Diaporthe leptostromiformis (Lupinosis disease fungus).